The sequence spans 339 residues: DNA-directed RNA polymerase subunit alpha (339 aa).

An alpha N-terminal domain (alpha-NTD) region spans residues 1 to 233 (MVREEVAGST…DLFLPFLHAE (233 aa)). The alpha C-terminal domain (alpha-CTD) stretch occupies residues 264-339 (KKGIPLNCIF…IDLLKNKLSF (76 aa)).

This sequence belongs to the RNA polymerase alpha chain family. In plastids the minimal PEP RNA polymerase catalytic core is composed of four subunits: alpha, beta, beta', and beta''. When a (nuclear-encoded) sigma factor is associated with the core the holoenzyme is formed, which can initiate transcription.

Its subcellular location is the plastid. It localises to the chloroplast. The enzyme catalyses RNA(n) + a ribonucleoside 5'-triphosphate = RNA(n+1) + diphosphate. DNA-dependent RNA polymerase catalyzes the transcription of DNA into RNA using the four ribonucleoside triphosphates as substrates. This chain is DNA-directed RNA polymerase subunit alpha, found in Crithopsis delileana.